Reading from the N-terminus, the 198-residue chain is E3 ubiquitin-protein ligase rnf152 (198 aa).

The RING-type zinc finger occupies 12–55 (CQICFNYFSQRRLPKLLHCQHTCCSVCLSQMRLSQREIRCPWCR). The chain crosses the membrane as a helical span at residues 162–182 (TGVCTVLLVAFILIFLLGIVL).

The protein belongs to the RNF152 family.

Its subcellular location is the lysosome membrane. The catalysed reaction is S-ubiquitinyl-[E2 ubiquitin-conjugating enzyme]-L-cysteine + [acceptor protein]-L-lysine = [E2 ubiquitin-conjugating enzyme]-L-cysteine + N(6)-ubiquitinyl-[acceptor protein]-L-lysine.. Its pathway is protein modification; protein ubiquitination. E3 ubiquitin-protein ligase that acts as a negative regulator of mTORC1 signaling by mediating ubiquitination of RagA/RRAGA and RHEB. Catalyzes 'Lys-63'-linked polyubiquitination of RagA/RRAGA in response to amino acid starvation, thereby regulating mTORC1 signaling. Also mediates monoubiquitination of RHEB, promoting its association with the TSC-TBC complex and subsequent inhibition. Also mediates 'Lys-48'-linked polyubiquitination of target proteins and their subsequent targeting to the proteasome for degradation. The chain is E3 ubiquitin-protein ligase rnf152 from Danio rerio (Zebrafish).